The chain runs to 504 residues: ATP synthase subunit alpha, chloroplastic (504 aa).

Residue 169 to 176 (GDRQTGKT) participates in ATP binding.

This sequence belongs to the ATPase alpha/beta chains family. F-type ATPases have 2 components, CF(1) - the catalytic core - and CF(0) - the membrane proton channel. CF(1) has five subunits: alpha(3), beta(3), gamma(1), delta(1), epsilon(1). CF(0) has four main subunits: a, b, b' and c.

Its subcellular location is the plastid. It localises to the chloroplast thylakoid membrane. It catalyses the reaction ATP + H2O + 4 H(+)(in) = ADP + phosphate + 5 H(+)(out). Produces ATP from ADP in the presence of a proton gradient across the membrane. The alpha chain is a regulatory subunit. The chain is ATP synthase subunit alpha, chloroplastic from Stigeoclonium helveticum (Green alga).